The following is a 545-amino-acid chain: Pentatricopeptide repeat-containing protein At4g18840 (545 aa).

PPR repeat units follow at residues 104–138 (NGFTHNSVIRAYANSSTPEVALTVFREMLLGPVFP), 139–173 (DKYSFTFVLKACAAFCGFEEGRQIHGLFIKSGLVT), 174–204 (DVFVENTLVNVYGRSGYFEIARKVLDRMPVR), 205–239 (DAVSWNSLLSAYLEKGLVDEARALFDEMEERNVES), 240–266 (WNFMISGYAAAGLVKEAKEVFDSMPVR), 267–301 (DVVSWNAMVTAYAHVGCYNEVLEVFNKMLDDSTEK), 303–337 (DGFTLVSVLSACASLGSLSQGEWVHVYIDKHGIEI), 338–368 (EGFLATALVDMYSKCGKIDKALEVFRATSKR), 369–403 (DVSTWNSIISDLSVHGLGKDALEIFSEMVYEGFKP), 404–434 (NGITFIGVLSACNHVGMLDQARKLFEMMSSV), and 440–474 (TIEHYGCMVDLLGRMGKIEEAEELVNEIPADEASI). The segment at 475–545 (LLESLLGACK…ERVNRSLDVA (71 aa)) is type E motif.

This sequence belongs to the PPR family. PCMP-E subfamily.

In Arabidopsis thaliana (Mouse-ear cress), this protein is Pentatricopeptide repeat-containing protein At4g18840 (PCMP-E101).